We begin with the raw amino-acid sequence, 121 residues long: Large ribosomal subunit protein uL22 (121 aa).

The protein belongs to the universal ribosomal protein uL22 family. Part of the 50S ribosomal subunit.

In terms of biological role, this protein binds specifically to 23S rRNA; its binding is stimulated by other ribosomal proteins, e.g. L4, L17, and L20. It is important during the early stages of 50S assembly. It makes multiple contacts with different domains of the 23S rRNA in the assembled 50S subunit and ribosome. The globular domain of the protein is located near the polypeptide exit tunnel on the outside of the subunit, while an extended beta-hairpin is found that lines the wall of the exit tunnel in the center of the 70S ribosome. In Hydrogenobaculum sp. (strain Y04AAS1), this protein is Large ribosomal subunit protein uL22.